The sequence spans 415 residues: MAAPVDDMFSRCVDSAKASNCVDVRFINNVKGKGLFAKKPFKKGDTIFIERPLVSSQFLWNALYKYRACEYCLRALETAEENARRLSGLPALILPHPELCKVRPDRHQACPQCQVMYCSSECRQAAMDQYHKILCLGPSNDDPDHPVNKLQDAWRSVHFPPETSSVMILAKMVATIKQTQDKERWQRLFTNFCSRTANEEEEIVHKLLGEKFQGQLGLLRNLFTTALYEDRLSQWFTPEGFRSLFSLVGTNGQGIGTSSLSQWVHACDALELPRQQREQLDAFIDQLYKDIDKETGDFLNCEGSGLFLLQSSCNHSCVPNAEASFPENNFLLHLTALGDIGPGEEICISYLDCCQRDRSRHSRHKILRENYLFICSCQKCLSQMDDADMTSEDEEEVEGEGETEGEDMEDEMTDV.

Residues 20-351 (NCVDVRFINN…PGEEICISYL (332 aa)) form the SET domain. The MYND-type zinc-finger motif lies at 95–135 (PHPELCKVRPDRHQACPQCQVMYCSSECRQAAMDQYHKILC). Tyrosine 350 is a binding site for S-adenosyl-L-methionine. Positions 388-415 (DMTSEDEEEVEGEGETEGEDMEDEMTDV) are disordered.

Belongs to the class V-like SAM-binding methyltransferase superfamily. In terms of tissue distribution, expressed at high levels in the ovary and at lower levels in the fin, testis and brain.

It is found in the cytoplasm. It carries out the reaction L-lysyl-[protein] + 3 S-adenosyl-L-methionine = N(6),N(6),N(6)-trimethyl-L-lysyl-[protein] + 3 S-adenosyl-L-homocysteine + 3 H(+). It catalyses the reaction L-lysyl(20)-[histone H4] + 3 S-adenosyl-L-methionine = N(6),N(6),N(6)-trimethyl-L-lysyl(20)-[histone H4] + 3 S-adenosyl-L-homocysteine + 3 H(+). The catalysed reaction is L-lysyl(36)-[histone H3] + 3 S-adenosyl-L-methionine = N(6),N(6),N(6)-trimethyl-L-lysyl(36)-[histone H3] + 3 S-adenosyl-L-homocysteine + 3 H(+). Functionally, protein-lysine N-trimethyltransferase that specifically catalyzes trimethylation of 'Lys-22' of the RPL40/eL40 subunit of the 60S ribosome, thereby promoting translation elongation and protein synthesis. May also act as a histone methyltransferase in the context of histone octamers, but not on nucleosome substrates: trimethylates 'Lys-36' of histone H3 and 'Lys-20' of histone H4 to form H3K36me3 and H4K20me3, respectively. The histone methyltransferase activity, which is independent of its SET domain, is however unsure in vivo. Plays a crucial role in hematopoiesis during embryogenesis by negatively regulating expression of genes related to both primitive and definitive hematopoiesis. The protein is Protein-lysine N-trimethyltransferase SMYD5 of Danio rerio (Zebrafish).